The chain runs to 435 residues: FAD-dependent monooxygenase ATEG_07662 (435 aa).

A helical transmembrane segment spans residues 8 to 28 (PLDVAIIGGGIIGIMTALGLL). The FAD site is built by E38, A51, and R119. A glycan (N-linked (GlcNAc...) asparagine) is linked at N191. The active site involves R201. Residues D317 and A330 each coordinate FAD.

This sequence belongs to the paxM FAD-dependent monooxygenase family. Requires FAD as cofactor.

It localises to the membrane. It functions in the pathway secondary metabolite biosynthesis. In terms of biological role, FAD-dependent monooxygenase; part of the cluster B that mediates the biosynthesis of azasperpyranones, members of the azaphilone family that exhibit anti-cancer activities. Azasperpyranones are synthesized by 2 clusters, A and B. Cluster A is responsible for the production of the polyhydric phenol moiety while the azaphilonoid scaffold is produced by the cluster B. The non-reducing polyketide synthase ATEG_03629 produces 5-methyl orsellinic acid, which is then reduced to 5-methyl orsellinic aldehyde by the NRPS-like protein ATEG_03630. 5-methyl orsellinic aldehyde is then first hydroxylated by the FAD-dependent monooxygenase ATEG_03635 and subsequently hydroxylated by the cytochrome P450 monooxygenase ATEG_03631 to produce the unstable polyhydric phenol precursor of azasperpyranones. On the other hand, the polyketide synthase ATEG_07659 is responsible for producing the 3,5-dimethyloctadienone moiety from acetyl-CoA, three malonyl-CoA, and two S-adenosyl methionines (SAM). The 3,5-dimethyloctadienone moiety is then loaded onto the SAT domain of ATEG_07661 and extended with four malonyl-CoA and one SAM, which leads to the formation of 2,4-dihydroxy-6-(5,7-dimethyl-2-oxo-trans-3-trans-5-nonadienyl)-3-methylbenzaldehyde (compound 8) after reductive release and aldol condensation. The FAD-dependent monooxygenase ATEG_07662 is the next enzyme in the biosynthesis sequence and hydroxylates the side chain at the benzylic position of compound 8. In Aspergillus nidulans, afoF, the ortholog of the FAD-dependent oxygenase ATEG_07660, is the key enzyme for the biosynthesis of asperfuranone by catalyzing the hydroxylation at C-8 of to prevent the formation of a six-membered ring hemiacetal intermediate and thus facilitating the formation of a five-membered ring to produce asperfuranone. In Aspergillus terreus, ATEG_07660 is probably not functional, which leads to the formation of the six-membered ring hemiacetal intermediate presperpyranone instead of asperfuranone. Finally, ATEG_03636 is involved in the condensation of the polyhydric phenol moiety produced by cluster A and the perasperpyranone precursor produced by cluster B, to yield azasperpyranone A. Further modifications of azasperpyranone A result in the production of derivatives, including azasperpyranone B to F. The protein is FAD-dependent monooxygenase ATEG_07662 of Aspergillus terreus (strain NIH 2624 / FGSC A1156).